The following is a 297-amino-acid chain: GTPase Era (297 aa).

The region spanning 7 to 174 is the Era-type G domain; the sequence is HSGFVSIIGR…VQVVRDLLPE (168 aa). Residues 15–22 form a G1 region; it reads GRPNVGKS. 15 to 22 lines the GTP pocket; that stretch reads GRPNVGKS. The tract at residues 41 to 45 is G2; the sequence is QTTRN. The interval 62–65 is G3; that stretch reads DTPG. Residues 62 to 66 and 124 to 127 contribute to the GTP site; these read DTPGI and NKVD. The G4 stretch occupies residues 124–127; sequence NKVD. A G5 region spans residues 153-155; that stretch reads VSA. One can recognise a KH type-2 domain in the interval 205–282; the sequence is THDEVPYSVA…FLELFVRVSR (78 aa).

It belongs to the TRAFAC class TrmE-Era-EngA-EngB-Septin-like GTPase superfamily. Era GTPase family. As to quaternary structure, monomer.

It is found in the cytoplasm. The protein resides in the cell inner membrane. Its function is as follows. An essential GTPase that binds both GDP and GTP, with rapid nucleotide exchange. Plays a role in 16S rRNA processing and 30S ribosomal subunit biogenesis and possibly also in cell cycle regulation and energy metabolism. The sequence is that of GTPase Era from Geotalea daltonii (strain DSM 22248 / JCM 15807 / FRC-32) (Geobacter daltonii).